A 421-amino-acid chain; its full sequence is Testin (421 aa).

The region spanning Met-92–Asp-199 is the PET domain. Positions Gln-135 to His-165 are disordered. Residues Leu-154–His-165 are compositionally biased toward basic and acidic residues. LIM zinc-binding domains follow at residues Tyr-234–Glu-297, Pro-299–Val-359, and Gln-362–Ser-421.

This sequence belongs to the prickle / espinas / testin family. Interacts via LIM domain 1 with ZYX. Interacts (via LIM domain 3) with ENAH and VASP. Interacts with ALKBH4, talin, actin, alpha-actinin, GRIP1 and PXN. Interacts (via LIM domain 2) with ACTL7A (via N-terminus). Heterodimer with ACTL7A; the heterodimer interacts with ENAH to form a heterotrimer.

The protein localises to the cytoplasm. The protein resides in the cell junction. It is found in the focal adhesion. Its function is as follows. Scaffold protein that may play a role in cell adhesion, cell spreading and in the reorganization of the actin cytoskeleton. Plays a role in the regulation of cell proliferation. May act as a tumor suppressor. The sequence is that of Testin (TES) from Dasypus novemcinctus (Nine-banded armadillo).